The following is a 491-amino-acid chain: Cytosol aminopeptidase (491 aa).

The Mn(2+) site is built by K263 and D268. K275 is a catalytic residue. Residues D286, D345, and E347 each contribute to the Mn(2+) site. The active site involves R349.

This sequence belongs to the peptidase M17 family. Mn(2+) is required as a cofactor.

The protein localises to the cytoplasm. The catalysed reaction is Release of an N-terminal amino acid, Xaa-|-Yaa-, in which Xaa is preferably Leu, but may be other amino acids including Pro although not Arg or Lys, and Yaa may be Pro. Amino acid amides and methyl esters are also readily hydrolyzed, but rates on arylamides are exceedingly low.. It carries out the reaction Release of an N-terminal amino acid, preferentially leucine, but not glutamic or aspartic acids.. Presumably involved in the processing and regular turnover of intracellular proteins. Catalyzes the removal of unsubstituted N-terminal amino acids from various peptides. The sequence is that of Cytosol aminopeptidase (pepA) from Haemophilus influenzae (strain ATCC 51907 / DSM 11121 / KW20 / Rd).